We begin with the raw amino-acid sequence, 68 residues long: MSLEMRIVELETRQAFQDDTIQALNDEVVEQSRVIERLQLQVAELIKRYEEMVGQYAGGGEEPPPPHY.

It belongs to the SlyX family.

The chain is Protein SlyX homolog from Pseudomonas entomophila (strain L48).